Consider the following 186-residue polypeptide: Large ribosomal subunit protein uL5 (186 aa).

This sequence belongs to the universal ribosomal protein uL5 family. Part of the 50S ribosomal subunit; part of the 5S rRNA/L5/L18/L25 subcomplex. Contacts the 5S rRNA and the P site tRNA. Forms a bridge to the 30S subunit in the 70S ribosome.

Functionally, this is one of the proteins that bind and probably mediate the attachment of the 5S RNA into the large ribosomal subunit, where it forms part of the central protuberance. In the 70S ribosome it contacts protein S13 of the 30S subunit (bridge B1b), connecting the 2 subunits; this bridge is implicated in subunit movement. Contacts the P site tRNA; the 5S rRNA and some of its associated proteins might help stabilize positioning of ribosome-bound tRNAs. The sequence is that of Large ribosomal subunit protein uL5 from Karelsulcia muelleri (strain GWSS) (Sulcia muelleri).